Reading from the N-terminus, the 456-residue chain is Exodeoxyribonuclease 7 large subunit (456 aa).

This sequence belongs to the XseA family. As to quaternary structure, heterooligomer composed of large and small subunits.

The protein resides in the cytoplasm. It catalyses the reaction Exonucleolytic cleavage in either 5'- to 3'- or 3'- to 5'-direction to yield nucleoside 5'-phosphates.. Bidirectionally degrades single-stranded DNA into large acid-insoluble oligonucleotides, which are then degraded further into small acid-soluble oligonucleotides. In Escherichia coli (strain ATCC 8739 / DSM 1576 / NBRC 3972 / NCIMB 8545 / WDCM 00012 / Crooks), this protein is Exodeoxyribonuclease 7 large subunit.